A 196-amino-acid chain; its full sequence is dITP/XTP pyrophosphatase (196 aa).

Serine 10 to lysine 15 is a binding site for substrate. Mg(2+)-binding residues include glutamate 40 and aspartate 69. Residue aspartate 69 is the Proton acceptor of the active site. Residues serine 70, phenylalanine 147–aspartate 150, lysine 170, and histidine 175–arginine 176 contribute to the substrate site.

It belongs to the HAM1 NTPase family. Homodimer. Mg(2+) serves as cofactor.

The catalysed reaction is XTP + H2O = XMP + diphosphate + H(+). It catalyses the reaction dITP + H2O = dIMP + diphosphate + H(+). It carries out the reaction ITP + H2O = IMP + diphosphate + H(+). In terms of biological role, pyrophosphatase that catalyzes the hydrolysis of nucleoside triphosphates to their monophosphate derivatives, with a high preference for the non-canonical purine nucleotides XTP (xanthosine triphosphate), dITP (deoxyinosine triphosphate) and ITP. Seems to function as a house-cleaning enzyme that removes non-canonical purine nucleotides from the nucleotide pool, thus preventing their incorporation into DNA/RNA and avoiding chromosomal lesions. This is dITP/XTP pyrophosphatase from Prochlorococcus marinus (strain NATL1A).